Consider the following 179-residue polypeptide: Protein YjaZ (179 aa).

This is Protein YjaZ from Escherichia coli (strain K12).